A 228-amino-acid polypeptide reads, in one-letter code: uncharacterized protein (228 aa).

A tRNA-binding domain is found at 99–207 (LANKVPFVVC…PKIKVGKPFI (109 aa)).

This is an uncharacterized protein from Mycoplasma genitalium (strain ATCC 33530 / DSM 19775 / NCTC 10195 / G37) (Mycoplasmoides genitalium).